The chain runs to 61 residues: Temporin-ALj (61 aa).

An N-terminal signal peptide occupies residues 1–22 (MFTLKKSLLLLFFLATINLSFC). The propeptide occupies 23-46 (EQERNAEEERRDEPDERNAEVEKR). Leucine 59 is modified (leucine amide).

Belongs to the frog skin active peptide (FSAP) family. Temporin subfamily. Expressed by the skin glands.

It localises to the secreted. Antimicrobial peptide with activity against Gram-positive and Gram-negative bacteria and against fungi. Has been tested against S.aureus (MIC=7.5 ug/mL), B.pumilus (MIC=15.0 ug/mL), B.cereus (MIC=75.0 ug/mL), E.coli (MIC=15.0 ug/mL), B.dysenteriae (MIC=30.0 ug/mL), A.cacoaceticus (MIC=60.0 ug/mL), P.aeruginosa (MIC=7.5 ug/mL) and C.albicans (MIC=5.0 ug/mL). Also shows a weak hemolytic activity. The polypeptide is Temporin-ALj (Amolops loloensis (Lolokou Sucker Frog)).